The sequence spans 397 residues: Carbamoyl phosphate synthase small chain (397 aa).

Positions Met1 to His204 are CPSase. 3 residues coordinate L-glutamine: Ser57, Gly252, and Gly254. Residues His204 to Ser391 form the Glutamine amidotransferase type-1 domain. Catalysis depends on Cys280, which acts as the Nucleophile. L-glutamine is bound by residues Leu281, Gln284, Asn322, and Tyr325. Residues His364 and Glu366 contribute to the active site.

Belongs to the CarA family. In terms of assembly, composed of two chains; the small (or glutamine) chain promotes the hydrolysis of glutamine to ammonia, which is used by the large (or ammonia) chain to synthesize carbamoyl phosphate. Tetramer of heterodimers (alpha,beta)4.

It carries out the reaction hydrogencarbonate + L-glutamine + 2 ATP + H2O = carbamoyl phosphate + L-glutamate + 2 ADP + phosphate + 2 H(+). The enzyme catalyses L-glutamine + H2O = L-glutamate + NH4(+). Its pathway is amino-acid biosynthesis; L-arginine biosynthesis; carbamoyl phosphate from bicarbonate: step 1/1. It participates in pyrimidine metabolism; UMP biosynthesis via de novo pathway; (S)-dihydroorotate from bicarbonate: step 1/3. Small subunit of the glutamine-dependent carbamoyl phosphate synthetase (CPSase). CPSase catalyzes the formation of carbamoyl phosphate from the ammonia moiety of glutamine, carbonate, and phosphate donated by ATP, constituting the first step of 2 biosynthetic pathways, one leading to arginine and/or urea and the other to pyrimidine nucleotides. The small subunit (glutamine amidotransferase) binds and cleaves glutamine to supply the large subunit with the substrate ammonia. The chain is Carbamoyl phosphate synthase small chain from Buchnera aphidicola subsp. Baizongia pistaciae (strain Bp).